The sequence spans 584 residues: Pentalenolactone D synthase (584 aa).

Residues 55–56 (IG), 77–78 (DG), 85–86 (TW), 97–98 (DV), tyrosine 103, valine 147, and methionine 486 contribute to the FAD site.

The protein belongs to the FAD-binding monooxygenase family. It depends on FAD as a cofactor.

It carries out the reaction 1-deoxy-11-oxopentalenate + NADPH + O2 + H(+) = pentalenolactone D + NADP(+) + H2O. The protein operates within antibiotic biosynthesis; pentalenolactone biosynthesis. Functionally, catalyzes the flavin-dependent Baeyer-Villiger oxidation of 1-deoxy-11-oxopentalenic acid to pentalenolactone D in the biosynthesis of pentalenolactone antibiotic. The chain is Pentalenolactone D synthase (penE) from Streptomyces exfoliatus (Streptomyces hydrogenans).